A 458-amino-acid polypeptide reads, in one-letter code: Histidine--tRNA ligase (458 aa).

It belongs to the class-II aminoacyl-tRNA synthetase family. In terms of assembly, homodimer.

It is found in the cytoplasm. The enzyme catalyses tRNA(His) + L-histidine + ATP = L-histidyl-tRNA(His) + AMP + diphosphate + H(+). The chain is Histidine--tRNA ligase from Azobacteroides pseudotrichonymphae genomovar. CFP2.